The primary structure comprises 319 residues: ADP-L-glycero-D-manno-heptose-6-epimerase (319 aa).

Residues 10–11 (FI), 31–32 (DD), K38, K53, and 75–79 (EGACS) contribute to the NADP(+) site. Y139 serves as the catalytic Proton acceptor. Residue K143 coordinates NADP(+). Substrate is bound at residue N168. NADP(+)-binding residues include V169 and K177. K177 (proton acceptor) is an active-site residue. Substrate is bound by residues S179, H186, 200–203 (FEGA), R213, and Y281.

The protein belongs to the NAD(P)-dependent epimerase/dehydratase family. HldD subfamily. Homopentamer. It depends on NADP(+) as a cofactor.

The enzyme catalyses ADP-D-glycero-beta-D-manno-heptose = ADP-L-glycero-beta-D-manno-heptose. Its pathway is nucleotide-sugar biosynthesis; ADP-L-glycero-beta-D-manno-heptose biosynthesis; ADP-L-glycero-beta-D-manno-heptose from D-glycero-beta-D-manno-heptose 7-phosphate: step 4/4. Functionally, catalyzes the interconversion between ADP-D-glycero-beta-D-manno-heptose and ADP-L-glycero-beta-D-manno-heptose via an epimerization at carbon 6 of the heptose. This is ADP-L-glycero-D-manno-heptose-6-epimerase from Aromatoleum aromaticum (strain DSM 19018 / LMG 30748 / EbN1) (Azoarcus sp. (strain EbN1)).